A 159-amino-acid polypeptide reads, in one-letter code: Large ribosomal subunit protein uL15 (159 aa).

The interval 1-39 (MKLNELSPADGSTKKRMRVGRGVGSGKGKTAGRGVKGQN) is disordered. Over residues 21–35 (RGVGSGKGKTAGRGV) the composition is skewed to gly residues.

Belongs to the universal ribosomal protein uL15 family. As to quaternary structure, part of the 50S ribosomal subunit.

In terms of biological role, binds to the 23S rRNA. The chain is Large ribosomal subunit protein uL15 from Hyphomonas neptunium (strain ATCC 15444).